The following is a 1400-amino-acid chain: DNA-directed RNA polymerase subunit beta' (1400 aa).

Zn(2+)-binding residues include cysteine 71, cysteine 73, cysteine 86, and cysteine 89. Mg(2+) contacts are provided by aspartate 462, aspartate 464, and aspartate 466. Zn(2+) is bound by residues cysteine 811, cysteine 885, cysteine 892, and cysteine 895.

This sequence belongs to the RNA polymerase beta' chain family. The RNAP catalytic core consists of 2 alpha, 1 beta, 1 beta' and 1 omega subunit. When a sigma factor is associated with the core the holoenzyme is formed, which can initiate transcription. Mg(2+) is required as a cofactor. The cofactor is Zn(2+).

The catalysed reaction is RNA(n) + a ribonucleoside 5'-triphosphate = RNA(n+1) + diphosphate. Its function is as follows. DNA-dependent RNA polymerase catalyzes the transcription of DNA into RNA using the four ribonucleoside triphosphates as substrates. The polypeptide is DNA-directed RNA polymerase subunit beta' (Brucella anthropi (strain ATCC 49188 / DSM 6882 / CCUG 24695 / JCM 21032 / LMG 3331 / NBRC 15819 / NCTC 12168 / Alc 37) (Ochrobactrum anthropi)).